Here is a 160-residue protein sequence, read N- to C-terminus: Nucleotide-binding protein Bpet3698 (160 aa).

This sequence belongs to the YajQ family.

In terms of biological role, nucleotide-binding protein. The sequence is that of Nucleotide-binding protein Bpet3698 from Bordetella petrii (strain ATCC BAA-461 / DSM 12804 / CCUG 43448).